A 398-amino-acid chain; its full sequence is 2,3-bisphosphoglycerate-independent phosphoglycerate mutase (398 aa).

Belongs to the BPG-independent phosphoglycerate mutase family. A-PGAM subfamily.

It catalyses the reaction (2R)-2-phosphoglycerate = (2R)-3-phosphoglycerate. It functions in the pathway carbohydrate degradation; glycolysis; pyruvate from D-glyceraldehyde 3-phosphate: step 3/5. Functionally, catalyzes the interconversion of 2-phosphoglycerate and 3-phosphoglycerate. The polypeptide is 2,3-bisphosphoglycerate-independent phosphoglycerate mutase (Methanosarcina barkeri (strain Fusaro / DSM 804)).